Here is a 182-residue protein sequence, read N- to C-terminus: ATP synthase subunit delta (182 aa).

Belongs to the ATPase delta chain family. In terms of assembly, F-type ATPases have 2 components, F(1) - the catalytic core - and F(0) - the membrane proton channel. F(1) has five subunits: alpha(3), beta(3), gamma(1), delta(1), epsilon(1). CF(0) has four main subunits: a(1), b(1), b'(1) and c(10-14). The alpha and beta chains form an alternating ring which encloses part of the gamma chain. F(1) is attached to F(0) by a central stalk formed by the gamma and epsilon chains, while a peripheral stalk is formed by the delta, b and b' chains.

It localises to the cellular thylakoid membrane. Functionally, f(1)F(0) ATP synthase produces ATP from ADP in the presence of a proton or sodium gradient. F-type ATPases consist of two structural domains, F(1) containing the extramembraneous catalytic core and F(0) containing the membrane proton channel, linked together by a central stalk and a peripheral stalk. During catalysis, ATP synthesis in the catalytic domain of F(1) is coupled via a rotary mechanism of the central stalk subunits to proton translocation. This protein is part of the stalk that links CF(0) to CF(1). It either transmits conformational changes from CF(0) to CF(1) or is implicated in proton conduction. The chain is ATP synthase subunit delta from Parasynechococcus marenigrum (strain WH8102).